A 446-amino-acid polypeptide reads, in one-letter code: Tubulin beta-6 chain (446 aa).

Gln11, Glu69, Ser138, Gly142, Thr143, Gly144, Asn204, and Asn226 together coordinate GTP. Mg(2+) is bound at residue Glu69. Residues 426-446 form a disordered region; sequence QDATADEEEYEDEEEVQADDM. The span at 429–446 shows a compositional bias: acidic residues; it reads TADEEEYEDEEEVQADDM.

This sequence belongs to the tubulin family. Dimer of alpha and beta chains. A typical microtubule is a hollow water-filled tube with an outer diameter of 25 nm and an inner diameter of 15 nM. Alpha-beta heterodimers associate head-to-tail to form protofilaments running lengthwise along the microtubule wall with the beta-tubulin subunit facing the microtubule plus end conferring a structural polarity. Microtubules usually have 13 protofilaments but different protofilament numbers can be found in some organisms and specialized cells. The cofactor is Mg(2+).

It is found in the cytoplasm. The protein localises to the cytoskeleton. In terms of biological role, tubulin is the major constituent of microtubules, a cylinder consisting of laterally associated linear protofilaments composed of alpha- and beta-tubulin heterodimers. Microtubules grow by the addition of GTP-tubulin dimers to the microtubule end, where a stabilizing cap forms. Below the cap, tubulin dimers are in GDP-bound state, owing to GTPase activity of alpha-tubulin. The polypeptide is Tubulin beta-6 chain (TUBB6) (Zea mays (Maize)).